Reading from the N-terminus, the 496-residue chain is Pyrrole-2-carboxylic acid decarboxylase (496 aa).

Trp-166 provides a ligand contact to K(+). Residues Val-168, Arg-170, Gln-187, and His-188 each contribute to the prenylated FMN site. His-188 contacts Mn(2+). Residues Ala-218, Ala-219, Met-221, and Glu-229 each coordinate K(+). Glu-229 provides a ligand contact to prenylated FMN. A Mn(2+)-binding site is contributed by Glu-229. Glu-278 functions as the Proton donor in the catalytic mechanism. His-386 contributes to the prenylated FMN binding site.

It belongs to the UbiD family. UbiD-like/FDC subfamily. Homodimer. Prenylated FMN is required as a cofactor. The cofactor is Mn(2+). K(+) serves as cofactor.

It carries out the reaction pyrrole-2-carboxylate + H(+) = 1H-pyrrole + CO2. It catalyses the reaction pyrrole-2-carboxylate + H2O = 1H-pyrrole + hydrogencarbonate. Imidazole acts as a reversible inhibitor via the formation of an imidazole-prenyl-FMN adduct. Activity is light sensitive. Functionally, catalyzes the prenyl-FMN-dependent decarboxylation of pyrrole-2-carboxylate (P2C). Can also catalyze the carboxylation of pyrrole in the presence of elevated concentrations of CO(2) or bicarbonate. Can accept a modest range of heteroaromatic compounds such as 3-methylpyrrole-2-carboxylate, indole-3-carboxylate and furan-2-carboxylate, and shows very low activity with thiophene-2-carboxylate. Attenuates the virulence of P.aeruginosa in a Drosophila model when overexpressed. The polypeptide is Pyrrole-2-carboxylic acid decarboxylase (Pseudomonas aeruginosa (strain ATCC 15692 / DSM 22644 / CIP 104116 / JCM 14847 / LMG 12228 / 1C / PRS 101 / PAO1)).